A 585-amino-acid chain; its full sequence is FAD-linked oxidoreductase apf9 (585 aa).

A signal peptide spans 1–19; it reads MKPHTVSLVLSNLASLAAA. N-linked (GlcNAc...) asparagine glycosylation is found at asparagine 40, asparagine 92, and asparagine 117. The 187-residue stretch at 108–294 folds into the FAD-binding PCMH-type domain; the sequence is IGNSPVYVVN…TEITVKTYPT (187 aa). Histidine 145 is subject to Pros-8alpha-FAD histidine. 3 N-linked (GlcNAc...) asparagine glycosylation sites follow: asparagine 352, asparagine 412, and asparagine 495.

It belongs to the oxygen-dependent FAD-linked oxidoreductase family. It depends on FAD as a cofactor.

The protein operates within secondary metabolite biosynthesis. Functionally, FAD-linked oxidoreductase; part of the gene cluster that mediates the biosynthesis of the cyclic tetrapeptide apicidin F (APF). The non-ribosomal peptide synthetase apf1 incorporates four different amino acids to produce apicidin F: L-phenylalanine, D-pipecolic acid (D-pip), N-methoxy-L-tryptophan and L-2-aminooctanedioic acid. L-Phenylalanine is the only proteinogenic amino acid directly used by apf1. The 3 other apf1 substrates are non-proteinogenic and have to be modified by other enzymes of the cluster. Lysine is converted to delta-1-pyrroline-5-carboxylate (P5C) which is reduced to L-pipecolic acid (L-pip) by apf3. L-pip is epimerized to D-pip, probably by apf1 activity, prior to incorporation. L-Tryptophan is N-oxidyzed by one of the cytochrome P450 monooxygenases (apf7 or apf8), and further methylated at the hydroxy group by the O-methyltransferase apf6 to yield N-methoxy-L-tryptophan. The synthesis of the fourth apf1 substrate is more complex. The fatty acid synthase apf5 is involved in the synthesis of the octanoic acid backbone of L-2-aminooctanedioic acid by fixing one acetyl-CoA unit and three malonyl-CoA units. Then one of the cytochrome P450 monooxygenases (apf7 or apf8) may oxidize this backbone to 2-oxooctanoic acid. The aminotransferase apf4 is predicted to catalyze the exchange of the keto group with an amino group. The next step would be the oxidation of 2-aminooctanoic acid by one of the cytochrome P450 monooxygenases (apf7 or apf8). The last step is the oxidation of 2-amino-8-hydroxyoctanoic acid to 2-aminooctanedioic acid is catalyzed by the FAD-dependent monooxygenase apf9. The protein is FAD-linked oxidoreductase apf9 of Gibberella fujikuroi (strain CBS 195.34 / IMI 58289 / NRRL A-6831) (Bakanae and foot rot disease fungus).